A 2763-amino-acid chain; its full sequence is MDIIPPIAVTVAGVGSRNQFDGALGPASGLSCLRTSLSFLHMTYAHGINATLSSDMIDGCLQEGAAWTTDLSNMGRGVPDMCALVDLPNRISYIKLGDTTSTCCVLSRIYGDSHFFTVPDEGFMCTQIPARAFFDDVWMGREESYTIITVDSTGMAIYRQGNISFIFDPHGHGTIGQAVVVRVNTTDVYSYIASEYTHRPDNVESQWAAALVFFVTANDGPVSEEALSSAVTLIYGSCDTYFTDEQYCEKLVTAQHPLLLSPPNSTTIVLNKSSIVPLHQNVGESVSLEATLHSTLTNTVALDPRCSYSEVDPWHAVLETTSTGSGVLDCRRRRRPSWTPPSSEENLACIDDGLVNNTHSTDNLHKPAKKVLKFKPTVDVPDKTQVAHVLPRLREVANTPDVVLNVSNVDTPESSPTFSRNMNVGSSLKDRKPFLFEQSGDVNMVVEKLLQHGHEISNGYVQNAVGTLDTVITGHTNVPIWVTRPLVMPDEKDPLELFINLTILRLTGFVVENGTRTHHGATSVVSDFIGPLGEILTGFPSAAELIRVTSLILTNMPGAEYAIKTVLRKKCTIGMLIIAKFGLVAMRVQDTTGALHAELDVLEADLGGSSPIDLYSRLSTGLISILNSPIISHPGLFAELIPTRTGSLSERIRLLCELVSARETRYMREHTALVSSVKALENALRSTRNKIDAIQIPEVPQEPPEETDIPPEELIRRVYEIRSEVTMLLTSAVTEYFTRGVLYSTRALIAEQSPRRFRVATASTAPIQRLLDSLPEFDAKLTAIISSLSIHPPPETIQNLPVVSLLKELIKEGEDLNTDTALVSWLSVVGEAQTAGYLSRREFDELSRTIKTINTRATQRASAEAELSCFNTLSAAVDQAVKDYETYNNGEVKYPEITRDDLLATIVRATDDLVRQIKILSDPMIQSGLQPSIKRRLETRLKEVQTYANEARTTQDTIKSRKQAAYNKLGGLLRPVTGFVGLRAAVDLLPELASELDVQGALVNLRTKVLEAPVEIRSQLTGDFWALFNQYRDILEHPGNARTSVLGGLGACFTAIIEIVPIPTEYRPSLLAFFGDVADVLASDIATVSTNPESESAINAVVATLSKATLVSSTVPALSFVLSLYKKYQALQQEITNTHKLTELQKQLGDDFSTLAVSSGHLKFISSSNVDDYEINDAILSIQTNVHALMDTVKLVEVELQKLPPHCIAGTSTLSRVVKDLHKLVTMAHEKKEQAKVLITDCERAHKQQTTRVLYERWTRDIIACLEAMETRHIFNGTELARLRDMAAAGGFDIHAVYPQARQVVAACETTAVTALDTVFRHNPYTPENTNIPPPLALLRGLTWFDDFSITAPVFTVMFPGVSIEGLLLLMRIRAVVLLSADTSINGIPNYRDMILRTSGDLLQIPALAGYVDFYTRSYDQFITESVTLSELRADIRQAAGAKLTEANKALEEVTHVRAHETAKLALKEGVFITLPSEGLLIRAIEYFTTFDHKRFIGTAYERVLQTMVDRDLKEANAELAQFRMVCQATKNRAIQILQNIVDTANATEQQEDVDFTNLKTLLKLTPPPKTIALAIDRSTSVQDIVTQFALLLGRLEEETGTLDIQAVDWMYQARNIIDSHPLSVRIDGTGPLHTYKDRVDKLYALRTKLDLLRRRIETGEVTWDDAWTTFKRETGDMLASGDTYATSVDSIKALQASASVVDMLCSEPEFFLLPVETKNRLQKKQQERKTALDVVLQKQRQFEETASRLRALIERIPTESDHDVLRMLLRDFDQFTHLPIWIKTQYMTFRNLLMVRLGLYASYAEIFPPASPNGVFAPIPAMSGVCLEDQSRCIRARVAAFMGEASVVQTFREARSSIDALFGKNLTFYLDTDGVPLRYRVCYKSVGVKLGTMLCSQGGLSLRPALPDEGIVEETTLSALRVANEVNELRIEYESAIKSGFSAFSTFVRHRHAEWGKTNARRAIAEIYAGLITTTLTRQYGVHWDKLIYSFEKHHLTSVMGNGLTKPIQRRGDVRVLELTLSDIVTILVATTPVHLLNFARLDLIKQHEYMARTLRPVIEAAFRGRLLVRSLDGDPKGNARAFFNAAPSKHKLPLALGSNQDPTGGRIFAFRMADWKLVKMPQKITDPFAPWQLSPPPGVKANVDAVTRIMATDRLATITVLGRMCLPPISLVSMWNTLQPEEFAYRTQDDVDIIVDARLDLSSTLNARFDTAPSNTTLEWNTDRKVITDAYIQTGATTVFTVTGAAPTHVSNVTAFDIATTAILFGAPLVIAMELTSVFSQNSGLTLGLKLFDSRHMATDSGISSAVSPDIVSWGLRLLHMDPHPIENACLIVQLEKLSALIANKPLTNNPPCLLLLDEHMNPSYVLWERKDSIPAPDYVVFWGPESLIDLPYIDSDEDSFPSCPDDPFYSQIIAGYAPQGPPNLDTTDFYPTEPLFKSPVQVVRSSKCKKMPVRPAQPAQPAQPAQPAQTVQPAQPIEPGTQIVVQNFKKPQSVKTTLSQKDIPLYVETESETAVLIPKQLTTSIKTTVCKSITPPNNQLSDWKNNPQQNQTLNQAFSKPILEITSIPTDDSISYRTWIEKSNQTQKRHQNDPRMYNSKTVFHPVNNQLPSWVDTAADAPQTDLLTNYKTRQPSPNFPRDVHTWGVSSNPFNSPNRDLYQSDFSEPSDGYSSESENSIVLSLDEHRSCRVPRHVRVVNADVVTGRRYVRGTALGALALLSQACRRMIDNVRYTRKLLMDHTEDIFQGLGYVKLLLDGTYI.

Residues 1-247 form a deubiquitination activity region; that stretch reads MDIIPPIAVT…CDTYFTDEQY (247 aa). The region spanning 12–237 is the Peptidase C76 domain; it reads AGVGSRNQFD…SSAVTLIYGS (226 aa). Catalysis depends on residues Cys32, Asp168, and His170. Positions 495 to 523 are interaction with inner tegument protein; sequence LELFINLTILRLTGFVVENGTRTHHGATS. Positions 2456 to 2476 are disordered; that stretch reads VRPAQPAQPAQPAQPAQTVQP. Repeat copies occupy residues 2458–2460, 2461–2463, 2464–2466, 2467–2469, and 2470–2472. Residues 2458–2472 form a 5 X 3 AA repeats of P-A-Q region; it reads PAQPAQPAQPAQPAQ. A compositionally biased stretch (low complexity) spans 2459-2476; the sequence is AQPAQPAQPAQPAQTVQP.

The protein belongs to the herpesviridae large tegument protein family. As to quaternary structure, interacts with host CUL1 and CUL4A; these interactions inhibit the E3 ligase activity of cullins. Interacts with inner tegument protein. Interacts with capsid vertex specific component CVC2. Interacts with the major capsid protein/MCP.

It localises to the virion tegument. The protein resides in the host cytoplasm. Its subcellular location is the host nucleus. The catalysed reaction is Thiol-dependent hydrolysis of ester, thioester, amide, peptide and isopeptide bonds formed by the C-terminal Gly of ubiquitin (a 76-residue protein attached to proteins as an intracellular targeting signal).. Large tegument protein that plays multiple roles in the viral cycle. During viral entry, remains associated with the capsid while most of the tegument is detached and participates in the capsid transport toward the host nucleus. Plays a role in the routing of the capsid at the nuclear pore complex and subsequent uncoating. Within the host nucleus, acts as a deneddylase and promotes the degradation of nuclear CRLs (cullin-RING ubiquitin ligases) and thereby stabilizes nuclear CRL substrates, while cytoplasmic CRLs remain unaffected. These modifications prevent host cell cycle S-phase progression and create a favorable environment allowing efficient viral genome replication. Participates later in the secondary envelopment of capsids. Indeed, plays a linker role for the association of the outer viral tegument to the capsids together with the inner tegument protein. The polypeptide is Large tegument protein deneddylase (Homo sapiens (Human)).